A 358-amino-acid chain; its full sequence is Photosystem II protein D1 2 (358 aa).

Helical transmembrane passes span 28–45 (YVGW…AATI), 117–132 (HFLI…QWEL), and 141–155 (WICV…AAMV). Histidine 117 contributes to the chlorophyll a binding site. Tyrosine 125 is a pheophytin a binding site. Residues aspartate 169 and glutamate 188 each contribute to the [CaMn4O5] cluster site. A helical transmembrane segment spans residues 196–217 (FHMLGVAGVFGGSLFSAMHGSL). Histidine 197 provides a ligand contact to chlorophyll a. A quinone contacts are provided by residues histidine 214 and 263–264 (SF). A Fe cation-binding site is contributed by histidine 214. Histidine 271 provides a ligand contact to Fe cation. Residues 273–287 (FLAAWPVVGIWFTSM) form a helical membrane-spanning segment. Residues histidine 331, glutamate 332, aspartate 341, and alanine 343 each contribute to the [CaMn4O5] cluster site. A propeptide spanning residues 344–358 (TTESAPVALQAPAVG) is cleaved from the precursor.

The protein belongs to the reaction center PufL/M/PsbA/D family. As to quaternary structure, PSII is composed of 1 copy each of membrane proteins PsbA, PsbB, PsbC, PsbD, PsbE, PsbF, PsbH, PsbI, PsbJ, PsbK, PsbL, PsbM, PsbT, PsbX, PsbY, PsbZ, Psb30/Ycf12, peripheral proteins PsbO, CyanoQ (PsbQ), PsbU, PsbV and a large number of cofactors. It forms dimeric complexes. The cofactor is The D1/D2 heterodimer binds P680, chlorophylls that are the primary electron donor of PSII, and subsequent electron acceptors. It shares a non-heme iron and each subunit binds pheophytin, quinone, additional chlorophylls, carotenoids and lipids. D1 provides most of the ligands for the Mn4-Ca-O5 cluster of the oxygen-evolving complex (OEC). There is also a Cl(-1) ion associated with D1 and D2, which is required for oxygen evolution. The PSII complex binds additional chlorophylls, carotenoids and specific lipids.. In terms of processing, tyr-160 forms a radical intermediate that is referred to as redox-active TyrZ, YZ or Y-Z. Post-translationally, C-terminally processed by CtpA; processing is essential to allow assembly of the oxygen-evolving complex and thus photosynthetic growth.

The protein localises to the cellular thylakoid membrane. The catalysed reaction is 2 a plastoquinone + 4 hnu + 2 H2O = 2 a plastoquinol + O2. In terms of biological role, photosystem II (PSII) is a light-driven water:plastoquinone oxidoreductase that uses light energy to abstract electrons from H(2)O, generating O(2) and a proton gradient subsequently used for ATP formation. It consists of a core antenna complex that captures photons, and an electron transfer chain that converts photonic excitation into a charge separation. The D1/D2 (PsbA/PsbD) reaction center heterodimer binds P680, the primary electron donor of PSII as well as several subsequent electron acceptors. The protein is Photosystem II protein D1 2 of Synechococcus sp. (strain RCC307).